A 183-amino-acid chain; its full sequence is UPF0398 protein PEPE_0933 (183 aa).

This sequence belongs to the UPF0398 family.

The sequence is that of UPF0398 protein PEPE_0933 from Pediococcus pentosaceus (strain ATCC 25745 / CCUG 21536 / LMG 10740 / 183-1w).